Reading from the N-terminus, the 448-residue chain is uncharacterized protein (448 aa).

Residues 19 to 41 (LGLLVPFLLLLFSCTNTVGYGVL) traverse the membrane as a helical segment. Residues 105–181 (YSYATSVLDG…CFSHGLSLFD (77 aa)) form the SH3b domain.

It localises to the membrane. This is an uncharacterized protein from Treponema pallidum (strain Nichols).